Consider the following 390-residue polypeptide: 3-ketoacyl-CoA thiolase (390 aa).

C95 functions as the Acyl-thioester intermediate in the catalytic mechanism. Residues H346 and C376 each act as proton acceptor in the active site.

It belongs to the thiolase-like superfamily. Thiolase family. As to quaternary structure, heterotetramer of two alpha chains (FadB) and two beta chains (FadA).

Its subcellular location is the cytoplasm. It catalyses the reaction an acyl-CoA + acetyl-CoA = a 3-oxoacyl-CoA + CoA. Its pathway is lipid metabolism; fatty acid beta-oxidation. Its function is as follows. Catalyzes the final step of fatty acid oxidation in which acetyl-CoA is released and the CoA ester of a fatty acid two carbons shorter is formed. The sequence is that of 3-ketoacyl-CoA thiolase from Psychrobacter cryohalolentis (strain ATCC BAA-1226 / DSM 17306 / VKM B-2378 / K5).